We begin with the raw amino-acid sequence, 825 residues long: Zinc finger protein 28 (825 aa).

The tract at residues 26–65 is disordered; the sequence is RPGGGPAAGTVVAPGSPDRGRPRSRNSLASQDQQGAVTSG. The segment covering 33-42 has biased composition (low complexity); it reads AGTVVAPGSP. Over residues 51–65 the composition is skewed to polar residues; the sequence is NSLASQDQQGAVTSG. The KRAB domain occupies 103-174; the sequence is VTFGDVAVVF…KRKMRKGQHL (72 aa). 14 C2H2-type zinc fingers span residues 377–399, 405–427, 433–456, 462–484, 490–512, 518–540, 546–568, 574–596, 602–624, 630–652, 658–680, 686–708, 714–736, and 742–764; these read FQCNECKKTFTQSSSLTVHQRIH, YKCNQCGKAFSDGSSFARHQRCH, YECPECGKAFIQNTSLVRHWRYYH, FDCIDCGKAFSDHIGLNQHRRIH, YTCEVCHKSFRYGSSLTVHQRIH, YECEICRKAFSHHASLTQHQRVH, FKCKECGKAFRQNIHLASHWRIH, FECGECGKSFSISSQLATHQRIH, YECKVCRKAFTQKAHLAQHQKTH, YECKECGKAFSQTTHLIQHQRVH, YKCLECGKAFGDNSSCTQHRRLH, YECVECGKTFKTKSSLICHRRCH, YECSACGKAFSHRQSLSVHQRIH, and YECKECRKTFIQIGHLNQHKRVH. The C2H2-type 15; degenerate zinc-finger motif lies at 770–792; the sequence is YNYKKGRRAFRQTAHFAHHQQIH.

It belongs to the krueppel C2H2-type zinc-finger protein family. Expressed predominantly in ovary.

The protein resides in the nucleus. Functionally, may be involved in transcriptional regulation. May have a role in embryonic development. This chain is Zinc finger protein 28 (Zfp28), found in Mus musculus (Mouse).